A 62-amino-acid chain; its full sequence is MTIAFQLAIFALIATSSILLISVPVVFASPDGWSSNKNVVFSGTSLWIGLVFLVGILNSLIS.

A run of 2 helical transmembrane segments spans residues 8–28 (AIFA…VVFA) and 41–61 (FSGT…NSLI).

It belongs to the PsbZ family. PSII is composed of 1 copy each of membrane proteins PsbA, PsbB, PsbC, PsbD, PsbE, PsbF, PsbH, PsbI, PsbJ, PsbK, PsbL, PsbM, PsbT, PsbY, PsbZ, Psb30/Ycf12, at least 3 peripheral proteins of the oxygen-evolving complex and a large number of cofactors. It forms dimeric complexes.

The protein localises to the plastid. It is found in the chloroplast thylakoid membrane. Its function is as follows. May control the interaction of photosystem II (PSII) cores with the light-harvesting antenna, regulates electron flow through the 2 photosystem reaction centers. PSII is a light-driven water plastoquinone oxidoreductase, using light energy to abstract electrons from H(2)O, generating a proton gradient subsequently used for ATP formation. This chain is Photosystem II reaction center protein Z, found in Acorus gramineus (Dwarf sweet flag).